Here is a 251-residue protein sequence, read N- to C-terminus: NADH-quinone oxidoreductase subunit C (251 aa).

A disordered region spans residues 1 to 34 (MSDANNTAGDANEVNPEKDLSAENLPGQRGQGGE).

Belongs to the complex I 30 kDa subunit family. In terms of assembly, NDH-1 is composed of 14 different subunits. Subunits NuoB, C, D, E, F, and G constitute the peripheral sector of the complex.

It is found in the cell membrane. The catalysed reaction is a quinone + NADH + 5 H(+)(in) = a quinol + NAD(+) + 4 H(+)(out). In terms of biological role, NDH-1 shuttles electrons from NADH, via FMN and iron-sulfur (Fe-S) centers, to quinones in the respiratory chain. The immediate electron acceptor for the enzyme in this species is believed to be a menaquinone. Couples the redox reaction to proton translocation (for every two electrons transferred, four hydrogen ions are translocated across the cytoplasmic membrane), and thus conserves the redox energy in a proton gradient. In Streptomyces coelicolor (strain ATCC BAA-471 / A3(2) / M145), this protein is NADH-quinone oxidoreductase subunit C.